A 512-amino-acid chain; its full sequence is SWI/SNF complex subunit SWI3A (512 aa).

In terms of domain architecture, SWIRM spans 13 to 110; sequence YTIPAQSSWF…FSSSLKKNDH (98 aa). An SANT domain is found at 223 to 274; it reads SAAAVWTEEEILLLLESVLKHGDDWELISQSVSTKSRLDCISKLIELPFGEF. A disordered region spans residues 291 to 325; it reads DENTEQVQTDGQEHEETETREEKEDRVNEDEPPAK. Residues 424 to 488 are a coiled coil; the sequence is ALGAAAAQAK…IEGVKETIIQ (65 aa).

Homodimers and heterodimers. Interacts with SWI3B, SWI3C, BSH, and the C-terminus of FCA, but not with BRM or SWI3D. As to expression, expressed in roots, stems, leaves and flowers, but not in siliques.

It localises to the nucleus. Functionally, component of a multiprotein complex equivalent of the SWI/SNF complex, an ATP-dependent chromatin-remodeling complex, which is required for the positive and negative regulation of gene expression of a large number of genes. It changes chromatin structure by altering DNA-histone contacts within a nucleosome, leading eventually to a change in nucleosome position, thus facilitating or repressing binding of gene-specific transcription factors. This chain is SWI/SNF complex subunit SWI3A (SWI3A), found in Arabidopsis thaliana (Mouse-ear cress).